Consider the following 368-residue polypeptide: Chaperone protein DnaJ (368 aa).

The 65-residue stretch at 5–69 folds into the J domain; the sequence is DYYEVLGLSQ…QKRAQYDQFG (65 aa). A CR-type zinc finger spans residues 130–212; sequence GKELNVEIPV…CHGSGKVRKR (83 aa). Zn(2+)-binding residues include Cys143, Cys146, Cys160, Cys163, Cys186, Cys189, Cys200, and Cys203. CXXCXGXG motif repeat units lie at residues 143–150, 160–167, 186–193, and 200–207; these read CDTCKGSG, CKHCSGSG, CGHCSGTG, and CTTCHGSG.

This sequence belongs to the DnaJ family. Homodimer. Zn(2+) is required as a cofactor.

It localises to the cytoplasm. In terms of biological role, participates actively in the response to hyperosmotic and heat shock by preventing the aggregation of stress-denatured proteins and by disaggregating proteins, also in an autonomous, DnaK-independent fashion. Unfolded proteins bind initially to DnaJ; upon interaction with the DnaJ-bound protein, DnaK hydrolyzes its bound ATP, resulting in the formation of a stable complex. GrpE releases ADP from DnaK; ATP binding to DnaK triggers the release of the substrate protein, thus completing the reaction cycle. Several rounds of ATP-dependent interactions between DnaJ, DnaK and GrpE are required for fully efficient folding. Also involved, together with DnaK and GrpE, in the DNA replication of plasmids through activation of initiation proteins. The chain is Chaperone protein DnaJ from Bacillus mycoides (strain KBAB4) (Bacillus weihenstephanensis).